Here is a 569-residue protein sequence, read N- to C-terminus: Protein ste7 (569 aa).

Disordered stretches follow at residues 195 to 219 (APIT…VNSV) and 255 to 274 (FSVS…SPPI). A compositionally biased stretch (low complexity) spans 198–219 (TTSSATHTSQFSTSSSSSVNSV). The span at 264–274 (PQTPISMSPPI) shows a compositional bias: pro residues.

The protein belongs to the arrestin family.

Has a role in promoting meiosis whereby it is involved in establishing the mating pheromone signaling pathway. It also has a role in suppressing meiosis until the conjugation process is complete. The chain is Protein ste7 (ste7) from Schizosaccharomyces pombe (strain 972 / ATCC 24843) (Fission yeast).